Consider the following 396-residue polypeptide: OTU domain-containing protein 3 (396 aa).

Residues Met1 to Glu49 are disordered. Positions Arg16–Pro41 are enriched in basic and acidic residues. The OTU domain occupies Leu64–Ile188. The residue at position 65 (Lys65) is an N6-acetyllysine. A cys-loop region spans residues Val69–Cys75. Asp72 is a catalytic residue. Cys75 acts as the Nucleophile in catalysis. Lys121 and Lys128 each carry N6-acetyllysine. The segment at Leu126 to Asp136 is variable-loop. Residues Tyr176–His181 form a his-loop region. His181 is an active-site residue. Lys219 is subject to N6-acetyllysine. The 41-residue stretch at Asp229–Leu269 folds into the UBA-like domain. A disordered region spans residues Thr275–Met381. Basic and acidic residues-rich tracts occupy residues Glu280–Ser301, Asn312–Ala331, and Gln343–Ala379. Lys290 carries the N6-acetyllysine modification.

In terms of processing, glucose and fatty acids stimulate CREBBP-dependent acetylation, promoting its nuclear translocation.

Its subcellular location is the cytoplasm. It localises to the nucleus. The catalysed reaction is Thiol-dependent hydrolysis of ester, thioester, amide, peptide and isopeptide bonds formed by the C-terminal Gly of ubiquitin (a 76-residue protein attached to proteins as an intracellular targeting signal).. In terms of biological role, deubiquitinating enzyme that hydrolyzes 'Lys-6'- and 'Lys-11'-linked polyubiquitin. Also hydrolyzes heterotypic (mixed and branched) and homotypic chains. Important regulator of energy metabolism. Glucose and fatty acids trigger its nuclear translocation by CBP-dependent acetylation. In the nucleus, deubiquitinates and stabilizes the nuclear receptor PPARD regulating the expression of various genes involved in glucose and lipid metabolism and oxidative phosphorylation. Also acts as a negative regulator of the ribosome quality control (RQC) by mediating deubiquitination of 40S ribosomal proteins RPS10/eS10 and RPS20/uS10, thereby antagonizing ZNF598-mediated 40S ubiquitination. This is OTU domain-containing protein 3 (Otud3) from Mus musculus (Mouse).